The primary structure comprises 210 residues: Glutathione S-transferase P 1 (210 aa).

In terms of domain architecture, GST N-terminal spans 2-81 (PPYTIVYFPV…HLGRSLGLYG (80 aa)). Residue tyrosine 4 is modified to Phosphotyrosine; by EGFR. Glutathione is bound by residues tyrosine 8, arginine 14, tryptophan 39, lysine 45, and 52–53 (QL). Residue threonine 62 is modified to Phosphothreonine. 65 to 66 (QS) contacts glutathione. Residues 83-204 (NQREAAQMDM…SSPEHVNRPI (122 aa)) enclose the GST C-terminal domain. N6-succinyllysine occurs at positions 103 and 116. Lysine 128 carries the N6-acetyllysine modification.

As to quaternary structure, homodimer. Interacts with CDK5. As to expression, ubiquitously expressed.

It localises to the cytoplasm. The protein localises to the mitochondrion. The protein resides in the nucleus. It catalyses the reaction RX + glutathione = an S-substituted glutathione + a halide anion + H(+). The enzyme catalyses prostaglandin J2 + glutathione = prostaglandin J2-S-(R)-glutathione. It carries out the reaction prostaglandin J2 + glutathione = prostaglandin J2-S-(S)-glutathione. The catalysed reaction is prostaglandin A2 + glutathione = prostaglandin A2-S-(S)-glutathione. It catalyses the reaction 11(S)-hydroxy-14(S),15(S)-epoxy-(5Z,8Z,12E)-eicosatrienoate + glutathione = (11S,15S)-dihydroxy-14(R)-S-glutathionyl-(5Z,8Z,12E)-eicosatrienoate. Conjugation of reduced glutathione to a wide number of exogenous and endogenous hydrophobic electrophiles. Involved in the formation of glutathione conjugates of both prostaglandin A2 (PGA2) and prostaglandin J2 (PGJ2). Participates in the formation of novel hepoxilin regioisomers. Negatively regulates CDK5 activity via p25/p35 translocation to prevent neurodegeneration. The chain is Glutathione S-transferase P 1 from Mus musculus (Mouse).